The chain runs to 253 residues: MSIHLLIVDALNLIRRIHAVQGSPCGDACSAALRQLVGHTTPSHAVAVFDQDDRAESWRHRLLPGYKAGRQAMPDALAQEMESLRAAFTAQGVACWHSPGNEADDLAATLAYKVAQGGHRVTIVSTDKGYCQLLSPQIQIRDYFQKRWLDLPFVQREFGVAPQQLTDFWGLAGIGSSKIPGISGIGAKTAAALLKEFGSLEALYQHLAQVPERWRQRLTEQREMAEICRRVATLQTDLALHGNLQQLRLNGRA.

Asp104 contacts Mg(2+). The 5'-3' exonuclease domain occupies 160–250 (VAPQQLTDFW…HGNLQQLRLN (91 aa)). K(+) contacts are provided by Leu171, Ala172, Pro180, Ile182, and Ile185. Residues 184-189 (GIGAKT) form an interaction with DNA region.

It belongs to the Xni family. Mg(2+) serves as cofactor. Requires K(+) as cofactor.

Has flap endonuclease activity. During DNA replication, flap endonucleases cleave the 5'-overhanging flap structure that is generated by displacement synthesis when DNA polymerase encounters the 5'-end of a downstream Okazaki fragment. The protein is Flap endonuclease Xni of Edwardsiella ictaluri (strain 93-146).